A 136-amino-acid chain; its full sequence is Transcription antitermination protein NusB (136 aa).

Belongs to the NusB family.

Its function is as follows. Involved in transcription antitermination. Required for transcription of ribosomal RNA (rRNA) genes. Binds specifically to the boxA antiterminator sequence of the ribosomal RNA (rrn) operons. This Arthrobacter sp. (strain FB24) protein is Transcription antitermination protein NusB.